The following is a 409-amino-acid chain: UPF0261 protein Spro_4740 (409 aa).

It belongs to the UPF0261 family.

The polypeptide is UPF0261 protein Spro_4740 (Serratia proteamaculans (strain 568)).